A 155-amino-acid chain; its full sequence is Ribosomal RNA large subunit methyltransferase H (155 aa).

S-adenosyl-L-methionine is bound by residues Leu72, Gly103, and 122 to 127; that span reads LSALTL.

The protein belongs to the RNA methyltransferase RlmH family. Homodimer.

The protein localises to the cytoplasm. The catalysed reaction is pseudouridine(1915) in 23S rRNA + S-adenosyl-L-methionine = N(3)-methylpseudouridine(1915) in 23S rRNA + S-adenosyl-L-homocysteine + H(+). In terms of biological role, specifically methylates the pseudouridine at position 1915 (m3Psi1915) in 23S rRNA. The polypeptide is Ribosomal RNA large subunit methyltransferase H (Salmonella choleraesuis (strain SC-B67)).